The sequence spans 443 residues: tRNA modification GTPase MnmE (443 aa).

3 residues coordinate (6S)-5-formyl-5,6,7,8-tetrahydrofolate: R23, E82, and K121. The TrmE-type G domain occupies 215–364 (GTSIVLAGHP…LKQFIQKWMQ (150 aa)). N225 serves as a coordination point for K(+). GTP is bound by residues 225–230 (NVGKSS), 244–250 (TDIPGTT), and 269–272 (DSAG). Residue S229 coordinates Mg(2+). K(+) is bound by residues T244, I246, and T249. T250 serves as a coordination point for Mg(2+). K443 serves as a coordination point for (6S)-5-formyl-5,6,7,8-tetrahydrofolate.

Belongs to the TRAFAC class TrmE-Era-EngA-EngB-Septin-like GTPase superfamily. TrmE GTPase family. Homodimer. Heterotetramer of two MnmE and two MnmG subunits. The cofactor is K(+).

The protein resides in the cytoplasm. Its function is as follows. Exhibits a very high intrinsic GTPase hydrolysis rate. Involved in the addition of a carboxymethylaminomethyl (cmnm) group at the wobble position (U34) of certain tRNAs, forming tRNA-cmnm(5)s(2)U34. This chain is tRNA modification GTPase MnmE, found in Chlamydia caviae (strain ATCC VR-813 / DSM 19441 / 03DC25 / GPIC) (Chlamydophila caviae).